We begin with the raw amino-acid sequence, 345 residues long: GTPase Obg (345 aa).

An Obg domain is found at 1-158 (MFIDSVKITL…RLVRLELKLI (158 aa)). The region spanning 159 to 339 (ADVGLVGFPN…LKFMLLEEIK (181 aa)) is the OBG-type G domain. GTP-binding positions include 165 to 172 (GFPNVGKS), 190 to 194 (FTTLT), 212 to 215 (DIPG), 280 to 283 (SKSD), and 320 to 322 (SSL). Mg(2+) contacts are provided by Ser172 and Thr192.

Belongs to the TRAFAC class OBG-HflX-like GTPase superfamily. OBG GTPase family. Monomer. Requires Mg(2+) as cofactor.

The protein localises to the cytoplasm. Functionally, an essential GTPase which binds GTP, GDP and possibly (p)ppGpp with moderate affinity, with high nucleotide exchange rates and a fairly low GTP hydrolysis rate. Plays a role in control of the cell cycle, stress response, ribosome biogenesis and in those bacteria that undergo differentiation, in morphogenesis control. The polypeptide is GTPase Obg (Campylobacter jejuni subsp. doylei (strain ATCC BAA-1458 / RM4099 / 269.97)).